Consider the following 185-residue polypeptide: Ribosome-recycling factor (185 aa).

The span at 131–155 (DRKNANDKIKKSEKDKEITADESKS) shows a compositional bias: basic and acidic residues. A disordered region spans residues 131–156 (DRKNANDKIKKSEKDKEITADESKSA).

Belongs to the RRF family.

The protein localises to the cytoplasm. Functionally, responsible for the release of ribosomes from messenger RNA at the termination of protein biosynthesis. May increase the efficiency of translation by recycling ribosomes from one round of translation to another. The protein is Ribosome-recycling factor of Sulfurimonas denitrificans (strain ATCC 33889 / DSM 1251) (Thiomicrospira denitrificans (strain ATCC 33889 / DSM 1251)).